The primary structure comprises 610 residues: ATP-dependent zinc metalloprotease FtsH (610 aa).

The Cytoplasmic portion of the chain corresponds to 1 to 5; that stretch reads MNRSN. A helical transmembrane segment spans residues 6–26; the sequence is IWNLLFTILIIVTLFWLARFF. Residues 27–107 lie on the Periplasmic side of the membrane; it reads YVENSPVSKL…SGERSGSSSF (81 aa). Residues 108-128 form a helical membrane-spanning segment; that stretch reads WINVLGTLIPTILFIVVWLFI. Over 129 to 610 the chain is Cytoplasmic; the sequence is MRSLSGRNNQ…LSEEFEKVVE (482 aa). Residues Gly-164, 204-208, Leu-209, His-343, and Glu-371 each bind ATP; that span reads GTGKT. Residue His-423 coordinates Zn(2+). Glu-424 is a catalytic residue. The Zn(2+) site is built by His-427 and Asp-500.

It in the central section; belongs to the AAA ATPase family. In the C-terminal section; belongs to the peptidase M41 family. In terms of assembly, the isolated ADP-bound cytosolic domain forms a 6-fold symmetric protease disk and a 2-fold symmetric AAA ATPase ring. In the absence of nucleotide the AAA ATPase ring also forms symmetric hexamers. The cofactor is Zn(2+).

Its subcellular location is the cell inner membrane. Its function is as follows. Acts as a processive, ATP-dependent zinc metallopeptidase for both cytoplasmic and membrane proteins. Plays a role in the quality control of integral membrane proteins. The chain is ATP-dependent zinc metalloprotease FtsH from Thermotoga maritima (strain ATCC 43589 / DSM 3109 / JCM 10099 / NBRC 100826 / MSB8).